We begin with the raw amino-acid sequence, 266 residues long: Glucosamine-6-phosphate deaminase (266 aa).

Aspartate 72 serves as the catalytic Proton acceptor; for enolization step. Aspartate 141 (for ring-opening step) is an active-site residue. Residue histidine 143 is the Proton acceptor; for ring-opening step of the active site. Glutamate 148 acts as the For ring-opening step in catalysis.

The protein belongs to the glucosamine/galactosamine-6-phosphate isomerase family. NagB subfamily. In terms of assembly, homohexamer.

It carries out the reaction alpha-D-glucosamine 6-phosphate + H2O = beta-D-fructose 6-phosphate + NH4(+). The protein operates within amino-sugar metabolism; N-acetylneuraminate degradation; D-fructose 6-phosphate from N-acetylneuraminate: step 5/5. With respect to regulation, allosterically activated by N-acetylglucosamine 6-phosphate (GlcNAc6P). Its function is as follows. Catalyzes the reversible isomerization-deamination of glucosamine 6-phosphate (GlcN6P) to form fructose 6-phosphate (Fru6P) and ammonium ion. This is Glucosamine-6-phosphate deaminase from Klebsiella pneumoniae subsp. pneumoniae (strain ATCC 700721 / MGH 78578).